Consider the following 509-residue polypeptide: MAAAAGMMLLGLLQAGGSVLGQAMEKVTGGNLLSMLLIACAFTLSLVYLFRLAVGHLVQLPAGAKSPPYIFSPIPFLGHAIAFGKSPIEFLENAYEKYGPVFSFTMVGKTFTYLLGSDAAALLFNSKNEDLNAEDVYSRLTTPVFGKGVAYDVPNPVFLEQKKMLKSGLNIAHFKQHVSIIEKETKEYFESWGESGEKNVFEALSELIILTASHCLHGKEVRSQLNEKVAQLYADLDGGFSHAAWLLPGWLPLPSFRRRDRAHREIKDIFYKAIQKRRQSQEKIDDILQTLLDATYKDGRPLTDDEVAGMLIGLLLAGQHTSSTTSAWMGFFLARDKTLQEKCYLEQKTVCGENLPPLTYDQLKDLNLLDRCIKETLRLRPPIMIMMRMARTPQTVAGYTIPPGHQVCVSPTVNQRLKDSWVERLDFNPDRYLQDNPASGEKFAYVPFGAGRHRCIGENFAYVQIKTIWSTMLRLYEFDLIDGYFPTVNYTTMIHTPENPVIRYKRRSK.

Residues 30 to 50 (GNLLSMLLIACAFTLSLVYLF) traverse the membrane as a helical segment. A heme-binding site is contributed by Cys455.

This sequence belongs to the cytochrome P450 family. Heme is required as a cofactor. In terms of processing, ubiquitinated by MARCHF6, leading to proteasomal degradation.

Its subcellular location is the endoplasmic reticulum membrane. It is found in the microsome membrane. The catalysed reaction is a 14alpha-methyl steroid + 3 reduced [NADPH--hemoprotein reductase] + 3 O2 = a Delta(14) steroid + formate + 3 oxidized [NADPH--hemoprotein reductase] + 4 H2O + 4 H(+). It catalyses the reaction lanosterol + 3 reduced [NADPH--hemoprotein reductase] + 3 O2 = 4,4-dimethyl-5alpha-cholesta-8,14,24-trien-3beta-ol + formate + 3 oxidized [NADPH--hemoprotein reductase] + 4 H2O + 4 H(+). The enzyme catalyses 24,25-dihydrolanosterol + 3 reduced [NADPH--hemoprotein reductase] + 3 O2 = 4,4-dimethyl-8,14-cholestadien-3beta-ol + formate + 3 oxidized [NADPH--hemoprotein reductase] + 4 H2O + 4 H(+). It carries out the reaction a 14alpha-methyl steroid + reduced [NADPH--hemoprotein reductase] + O2 = a 14alpha-hydroxymethyl steroid + oxidized [NADPH--hemoprotein reductase] + H2O + H(+). The catalysed reaction is a 14alpha-hydroxymethyl steroid + reduced [NADPH--hemoprotein reductase] + O2 = a 14alpha-formyl steroid + oxidized [NADPH--hemoprotein reductase] + 2 H2O + H(+). It catalyses the reaction a 14alpha-formyl steroid + reduced [NADPH--hemoprotein reductase] + O2 = a Delta(14) steroid + formate + oxidized [NADPH--hemoprotein reductase] + H2O + 2 H(+). The enzyme catalyses lanosterol + reduced [NADPH--hemoprotein reductase] + O2 = 32-hydroxylanosterol + oxidized [NADPH--hemoprotein reductase] + H2O + H(+). It carries out the reaction 32-hydroxylanosterol + reduced [NADPH--hemoprotein reductase] + O2 = 32-oxolanosterol + oxidized [NADPH--hemoprotein reductase] + 2 H2O + H(+). The catalysed reaction is 32-oxolanosterol + reduced [NADPH--hemoprotein reductase] + O2 = 4,4-dimethyl-5alpha-cholesta-8,14,24-trien-3beta-ol + formate + oxidized [NADPH--hemoprotein reductase] + H2O + 2 H(+). It catalyses the reaction 24,25-dihydrolanosterol + reduced [NADPH--hemoprotein reductase] + O2 = 32-hydroxy-24,25-dihydrolanosterol + oxidized [NADPH--hemoprotein reductase] + H2O + H(+). The enzyme catalyses 32-hydroxy-24,25-dihydrolanosterol + reduced [NADPH--hemoprotein reductase] + O2 = 32-oxo-24,25-dihydrolanosterol + oxidized [NADPH--hemoprotein reductase] + 2 H2O + H(+). It carries out the reaction 32-oxo-24,25-dihydrolanosterol + reduced [NADPH--hemoprotein reductase] + O2 = 4,4-dimethyl-8,14-cholestadien-3beta-ol + formate + oxidized [NADPH--hemoprotein reductase] + H2O + 2 H(+). It functions in the pathway steroid biosynthesis; zymosterol biosynthesis; zymosterol from lanosterol: step 1/6. With respect to regulation, inhibited by azalanstat. Inhibited by azole antifungal agents ketoconazole, itraconazole and fluconazole. Its function is as follows. Sterol 14alpha-demethylase that plays a critical role in the cholesterol biosynthesis pathway, being cholesterol the major sterol component in mammalian membranes as well as a precursor for bile acid and steroid hormone synthesis. Cytochrome P450 monooxygenase that catalyzes the three-step oxidative removal of the 14alpha-methyl group (C-32) of sterols such as lanosterol (lanosta-8,24-dien-3beta-ol) and 24,25-dihydrolanosterol (DHL) in the form of formate, and converts the sterols to 4,4-dimethyl-5alpha-cholesta-8,14,24-trien-3beta-ol and 4,4-dimethyl-8,14-cholestadien-3beta-ol, respectively, which are intermediates of cholesterol biosynthesis. Can also demethylate substrates not intrinsic to mammals, such as eburicol (24-methylene-24,25-dihydrolanosterol), but at a lower rate than DHL. The polypeptide is Lanosterol 14-alpha demethylase (Pongo abelii (Sumatran orangutan)).